Reading from the N-terminus, the 236-residue chain is LexA repressor (236 aa).

A DNA-binding region (H-T-H motif) is located at residues 26–46 (FDEMKEALDLASKSGIHRLIT). A disordered region spans residues 84–107 (SPSVIEGGQGRSSPAPRPAANNDD). Catalysis depends on for autocatalytic cleavage activity residues serine 157 and lysine 195.

This sequence belongs to the peptidase S24 family. Homodimer.

It catalyses the reaction Hydrolysis of Ala-|-Gly bond in repressor LexA.. In terms of biological role, represses a number of genes involved in the response to DNA damage (SOS response), including recA and lexA. In the presence of single-stranded DNA, RecA interacts with LexA causing an autocatalytic cleavage which disrupts the DNA-binding part of LexA, leading to derepression of the SOS regulon and eventually DNA repair. The polypeptide is LexA repressor (Chelativorans sp. (strain BNC1)).